We begin with the raw amino-acid sequence, 1007 residues long: Beta-galactosidase A (1007 aa).

An N-terminal signal peptide occupies residues 1–18 (MKLSSACAIALLAAQAAG). Residues Tyr96 and 140-142 (NAE) each bind substrate. Residue Asn156 is glycosylated (N-linked (GlcNAc...) asparagine). Residue Asn199 coordinates substrate. Catalysis depends on Glu200, which acts as the Proton donor. 2 disulfide bridges follow: Cys205/Cys206 and Cys266/Cys315. The active-site Nucleophile is the Glu298. Residue Tyr364 coordinates substrate. Asn402, Asn422, Asn478, Asn522, Asn622, Asn739, Asn760, Asn777, Asn805, and Asn914 each carry an N-linked (GlcNAc...) asparagine glycan.

It belongs to the glycosyl hydrolase 35 family.

The protein resides in the secreted. The catalysed reaction is Hydrolysis of terminal non-reducing beta-D-galactose residues in beta-D-galactosides.. Functionally, cleaves beta-linked terminal galactosyl residues from gangliosides, glycoproteins, and glycosaminoglycans. This Aspergillus niger (strain ATCC MYA-4892 / CBS 513.88 / FGSC A1513) protein is Beta-galactosidase A (lacA).